A 328-amino-acid chain; its full sequence is Fructosamine deglycase FrlB (328 aa).

SIS domains are found at residues 15–153 (FLQD…VLEN) and 181–311 (NAKQ…ELAE).

As to quaternary structure, homooctamer.

Functionally, catalyzes the conversion of a range of fructosamine 6-phosphates to glucose 6-phosphate and a free amino acid. The chain is Fructosamine deglycase FrlB (frlB) from Bacillus subtilis (strain 168).